A 497-amino-acid chain; its full sequence is Glycerol kinase (497 aa).

Position 12 (T12) interacts with ADP. ATP-binding residues include T12, T13, and S14. T12 is a binding site for sn-glycerol 3-phosphate. Residue R16 participates in ADP binding. Sn-glycerol 3-phosphate is bound by residues R82, E83, Y134, and D243. Residues R82, E83, Y134, D243, and Q244 each coordinate glycerol. ADP-binding residues include T265 and G308. ATP-binding residues include T265, G308, Q312, and G409. ADP-binding residues include G409 and N413.

This sequence belongs to the FGGY kinase family.

It catalyses the reaction glycerol + ATP = sn-glycerol 3-phosphate + ADP + H(+). Its pathway is polyol metabolism; glycerol degradation via glycerol kinase pathway; sn-glycerol 3-phosphate from glycerol: step 1/1. Inhibited by fructose 1,6-bisphosphate (FBP). Functionally, key enzyme in the regulation of glycerol uptake and metabolism. Catalyzes the phosphorylation of glycerol to yield sn-glycerol 3-phosphate. This Nitratidesulfovibrio vulgaris (strain DSM 19637 / Miyazaki F) (Desulfovibrio vulgaris) protein is Glycerol kinase.